We begin with the raw amino-acid sequence, 490 residues long: Cysteine--tRNA ligase (490 aa).

Cysteine 31 provides a ligand contact to Zn(2+). Residues 33 to 43 (PTVYGDAHLGH) carry the 'HIGH' region motif. Zn(2+) is bound by residues cysteine 226, histidine 251, and glutamate 255. A 'KMSKS' region motif is present at residues 283 to 287 (KMGKS). Residue lysine 286 coordinates ATP.

The protein belongs to the class-I aminoacyl-tRNA synthetase family. As to quaternary structure, monomer. Zn(2+) is required as a cofactor.

It localises to the cytoplasm. It carries out the reaction tRNA(Cys) + L-cysteine + ATP = L-cysteinyl-tRNA(Cys) + AMP + diphosphate. This Porphyromonas gingivalis (strain ATCC BAA-308 / W83) protein is Cysteine--tRNA ligase.